The primary structure comprises 259 residues: Pimeloyl-[acyl-carrier protein] methyl ester esterase (259 aa).

The AB hydrolase-1 domain occupies 16–241 (FVMLHGWGMN…QSAHVPFISH (226 aa)). Residues tryptophan 22, 82–83 (SM), and 143–147 (FLLLQ) each bind substrate. The active-site Nucleophile is serine 82. Residues aspartate 207 and histidine 235 contribute to the active site. Histidine 235 is a binding site for substrate.

It belongs to the AB hydrolase superfamily. Carboxylesterase BioH family. As to quaternary structure, monomer.

The protein resides in the cytoplasm. It catalyses the reaction 6-carboxyhexanoyl-[ACP] methyl ester + H2O = 6-carboxyhexanoyl-[ACP] + methanol + H(+). It functions in the pathway cofactor biosynthesis; biotin biosynthesis. Functionally, the physiological role of BioH is to remove the methyl group introduced by BioC when the pimeloyl moiety is complete. It allows to synthesize pimeloyl-ACP via the fatty acid synthetic pathway through the hydrolysis of the ester bonds of pimeloyl-ACP esters. In Hamiltonella defensa subsp. Acyrthosiphon pisum (strain 5AT), this protein is Pimeloyl-[acyl-carrier protein] methyl ester esterase.